The chain runs to 404 residues: Type I restriction enzyme EcoR124I/EcoR124II specificity subunit (404 aa).

The segment at 1–153 (MSEMSYLEKL…PIPCPDNPEK (153 aa)) is target-recognition domain 1. Residues 154-199 (SLAIQSEIVRILDKFTALTAELTAELNMRKKQYNYYRDQLLSFKEG) form a conserved region 1 region. Residues 200 to 349 (EVEWKTLGEI…KLFSFKIPVP (150 aa)) form a target-recognition domain 2 region. Residues 350–404 (NINEQQRIVEILDKFDTLTNSITEGLPREIELRQKQYEYYRDLLFSFPKPETVSN) are conserved region 2.

Belongs to the type-I restriction system S methylase family. The type I restriction/modification system is composed of three polypeptides R, M and S; the restriction enzyme has stoichiometry R(2)M(2)S(1) while the methyltransferase is M(2)S(1). There is an equilibrium between R(2)M(2)S(1) and R(1)M(2)S(1); the latter is methylation and translocation proficient but restriction deficient. As to quaternary structure, (Microbial infection) Holoenenzyme interacts with Escherichia phage T7 protein Ocr; this interaction leads to the inhibition of the restriction activity, but may still allow methylation and translocation.

Its function is as follows. The specificity (S) subunit of a type I restriction enzyme; this subunit dictates DNA sequence specificity. The presence or absence of a 4-residue repeat changes the sequence specificity; a third copy of TAEL inserted at position 179-180 changes the recognition site from 5'-GAAN(6)RTCG-3' (for EcoR124I) to 5'-GAAN(7)RTCG-3' (for EcoR124II). The M and S subunits together form a methyltransferase (MTase) that methylates A-3 on the top and bottom strand of the sequence 5'-GAAN(7)RTCG-3'. In the presence of the R subunit the complex can also act as an endonuclease, binding to the same target sequence but cutting the DNA some distance from this site. Whether the DNA is cut or modified depends on the methylation state of the target sequence. When the target site is unmodified, the DNA is cut. When the target site is hemimethylated, the complex acts as a maintenance MTase modifying the DNA so that both strands become methylated. After locating a non-methylated recognition site, the enzyme complex serves as a molecular motor that translocates DNA in an ATP-dependent manner until a collision occurs that triggers cleavage. The R(1)M(2)S(1) complex translocates an average of 555 bp/second on nicked DNA; the R(2)M(2)S(1) complex translocates at double that speed. The 2 R subunit motors are independent and track along the helical pitch of the DNA, inducing positive supercoiling ahead of themselves. This is Type I restriction enzyme EcoR124I/EcoR124II specificity subunit (hsdS) from Escherichia coli.